Here is a 117-residue protein sequence, read N- to C-terminus: Large ribosomal subunit protein bL20c (117 aa).

It belongs to the bacterial ribosomal protein bL20 family.

It localises to the plastid. It is found in the chloroplast. Its function is as follows. Binds directly to 23S ribosomal RNA and is necessary for the in vitro assembly process of the 50S ribosomal subunit. It is not involved in the protein synthesizing functions of that subunit. This is Large ribosomal subunit protein bL20c from Gossypium hirsutum (Upland cotton).